Consider the following 653-residue polypeptide: 4-hydroxy-2,2'-bipyrrole-5-methanol synthase PigH (653 aa).

One can recognise a Carrier domain in the interval 7–84 (ETYETLKQSV…DALDGILQRE (78 aa)). S45 is subject to O-(pantetheine 4'-phosphoryl)serine. 354–355 (GY) contributes to the pyridoxal 5'-phosphate binding site. H379 is a substrate binding site. Positions 426, 454, and 482 each coordinate pyridoxal 5'-phosphate. Residue K485 is modified to N6-(pyridoxal phosphate)lysine. The helical transmembrane segment at 512–532 (VFAATIPAPVAAGVIASIDVM) threads the bilayer.

The cofactor is pyridoxal 5'-phosphate.

The protein localises to the membrane. It participates in antibiotic biosynthesis; prodigiosin biosynthesis. Functionally, involved in the biosynthesis of 4-methoxy-2,2'-bipyrrole-5-carbaldehyde (MBC), one of the terminal products involved in the biosynthesis of the red antibiotic prodigiosin (Pig). Carrier of the L-malonyl group (malonyl-S-PigH), which is decarboxylated by PigJ to yield a C2 carbanion acetyl-S-PigH. Then the pyrrolyl group of pyrrolyl-S-cysteinyl PigJ intermediate is captured by the C2 carbanion acetyl-S-PigH to yield the pyrrolyl-beta-ketoacyl-S-PigH. In the last step, PigH catalyzes the decarboxylative condensation between the pyrrolyl-beta-ketoacyl (pyrrolyl-beta-ketoacyl-S-PigH) and L-serine to yield 4-hydroxy-2,2'-bipyrrole-5-methanol (HBM). The polypeptide is 4-hydroxy-2,2'-bipyrrole-5-methanol synthase PigH (Serratia sp. (strain ATCC 39006) (Prodigiosinella confusarubida)).